The chain runs to 665 residues: UvrABC system protein B (665 aa).

In terms of domain architecture, Helicase ATP-binding spans 25–178; sequence ASLQAEHRFQ…RQLLRDLTTI (154 aa). ATP is bound at residue 38 to 45; that stretch reads GATGTGKT. A Beta-hairpin motif is present at residues 91 to 114; sequence YYDYYQPEAYIPVTDTYIEKTAAI. The Helicase C-terminal domain occupies 429–595; that stretch reads QVDDLLGEVR…PIVKKASNAI (167 aa). Positions 626–661 constitute a UVR domain; that stretch reads PELITQLEAQMKEAAKKLEFEEAAKYRDRIKQLRDK.

This sequence belongs to the UvrB family. In terms of assembly, forms a heterotetramer with UvrA during the search for lesions. Interacts with UvrC in an incision complex.

The protein resides in the cytoplasm. In terms of biological role, the UvrABC repair system catalyzes the recognition and processing of DNA lesions. A damage recognition complex composed of 2 UvrA and 2 UvrB subunits scans DNA for abnormalities. Upon binding of the UvrA(2)B(2) complex to a putative damaged site, the DNA wraps around one UvrB monomer. DNA wrap is dependent on ATP binding by UvrB and probably causes local melting of the DNA helix, facilitating insertion of UvrB beta-hairpin between the DNA strands. Then UvrB probes one DNA strand for the presence of a lesion. If a lesion is found the UvrA subunits dissociate and the UvrB-DNA preincision complex is formed. This complex is subsequently bound by UvrC and the second UvrB is released. If no lesion is found, the DNA wraps around the other UvrB subunit that will check the other stand for damage. This Cyanothece sp. (strain PCC 7425 / ATCC 29141) protein is UvrABC system protein B.